The chain runs to 245 residues: Adenylate kinase (245 aa).

ATP is bound at residue Gly-15 to Thr-20. An NMP region spans residues Ser-35–Leu-64. AMP-binding positions include Ser-36, Arg-41, Lys-62–Leu-64, Gly-103–Arg-106, and Gln-110. The LID stretch occupies residues Ser-143–Asp-176. Residue Arg-144 coordinates ATP. 2 residues coordinate Zn(2+): Cys-147 and Cys-150. Residue Ile-153–Tyr-154 coordinates ATP. Zn(2+)-binding residues include Cys-163 and Cys-166. AMP is bound by residues Arg-173 and Arg-184. ATP is bound at residue Ala-212.

It belongs to the adenylate kinase family. Monomer.

The protein resides in the cytoplasm. The catalysed reaction is AMP + ATP = 2 ADP. It functions in the pathway purine metabolism; AMP biosynthesis via salvage pathway; AMP from ADP: step 1/1. Functionally, catalyzes the reversible transfer of the terminal phosphate group between ATP and AMP. Plays an important role in cellular energy homeostasis and in adenine nucleotide metabolism. The protein is Adenylate kinase of Chlamydia trachomatis serovar A (strain ATCC VR-571B / DSM 19440 / HAR-13).